Consider the following 359-residue polypeptide: Phospho-N-acetylmuramoyl-pentapeptide-transferase (359 aa).

The next 10 membrane-spanning stretches (helical) occupy residues 26–46, 73–93, 98–118, 134–154, 166–186, 197–217, 234–254, 261–281, 286–306, and 338–358; these read TIYGGLTAFLICFLLGPWVIN, TMGGILILFSLGVSTLLWADL, ILITLLSMLLFGAIGFIDDYL, FLVQIMAGLVISYLVYLCPDF, FTPDLGIWYIPFATLVIVGTS, GLAIGPIIIAGVTYMIFAYVA, CGEITIVCGILAGAGLGFLWF, VFMGDTGSIPLGAILGTIAVI, ILLLVVGGLFVIEALSVIIQV, and IVRFWIIAITLALISLSTLKI.

The protein belongs to the glycosyltransferase 4 family. MraY subfamily. It depends on Mg(2+) as a cofactor.

The protein localises to the cell inner membrane. It catalyses the reaction UDP-N-acetyl-alpha-D-muramoyl-L-alanyl-gamma-D-glutamyl-meso-2,6-diaminopimeloyl-D-alanyl-D-alanine + di-trans,octa-cis-undecaprenyl phosphate = di-trans,octa-cis-undecaprenyl diphospho-N-acetyl-alpha-D-muramoyl-L-alanyl-D-glutamyl-meso-2,6-diaminopimeloyl-D-alanyl-D-alanine + UMP. The protein operates within cell wall biogenesis; peptidoglycan biosynthesis. Functionally, catalyzes the initial step of the lipid cycle reactions in the biosynthesis of the cell wall peptidoglycan: transfers peptidoglycan precursor phospho-MurNAc-pentapeptide from UDP-MurNAc-pentapeptide onto the lipid carrier undecaprenyl phosphate, yielding undecaprenyl-pyrophosphoryl-MurNAc-pentapeptide, known as lipid I. In Desulforapulum autotrophicum (strain ATCC 43914 / DSM 3382 / VKM B-1955 / HRM2) (Desulfobacterium autotrophicum), this protein is Phospho-N-acetylmuramoyl-pentapeptide-transferase.